Reading from the N-terminus, the 156-residue chain is Small ribosomal subunit protein uS7 (156 aa).

It belongs to the universal ribosomal protein uS7 family. In terms of assembly, part of the 30S ribosomal subunit. Contacts proteins S9 and S11.

One of the primary rRNA binding proteins, it binds directly to 16S rRNA where it nucleates assembly of the head domain of the 30S subunit. Is located at the subunit interface close to the decoding center, probably blocks exit of the E-site tRNA. This is Small ribosomal subunit protein uS7 from Gloeothece citriformis (strain PCC 7424) (Cyanothece sp. (strain PCC 7424)).